Here is a 116-residue protein sequence, read N- to C-terminus: Methionine-R-sulfoxide reductase B1 (116 aa).

The 106-residue stretch at 1–106 folds into the MsrB domain; sequence MSFCSFFGGE…FSSSLKFVPK (106 aa). Zn(2+)-binding residues include cysteine 23, cysteine 26, cysteine 71, and cysteine 74. The Nucleophile role is filled by selenocysteine 95. Residue selenocysteine 95 is a non-standard amino acid, selenocysteine.

The protein belongs to the MsrB Met sulfoxide reductase family. The cofactor is Zn(2+). Post-translationally, truncated MSRB1/SEPX1 proteins produced by failed UGA/Sec decoding are ubiquitinated by some Cul2-RING E3 ubiquitin-protein ligase complexes (containing either PRAME, PRAMF6, PRAMF9 or FEM1C as substrate-recognition component).

It localises to the cytoplasm. The protein localises to the nucleus. It is found in the cytoskeleton. The enzyme catalyses L-methionyl-[protein] + [thioredoxin]-disulfide + H2O = L-methionyl-(R)-S-oxide-[protein] + [thioredoxin]-dithiol. It catalyses the reaction [thioredoxin]-disulfide + L-methionine + H2O = L-methionine (R)-S-oxide + [thioredoxin]-dithiol. Its function is as follows. Methionine-sulfoxide reductase that specifically reduces methionine (R)-sulfoxide back to methionine. While in many cases, methionine oxidation is the result of random oxidation following oxidative stress, methionine oxidation is also a post-translational modification that takes place on specific residue. Acts as a regulator of actin assembly by reducing methionine (R)-sulfoxide mediated by MICALs (MICAL1, MICAL2 or MICAL3) on actin, thereby promoting filament repolymerization. Plays a role in innate immunity by reducing oxidized actin, leading to actin repolymerization in macrophages. The protein is Methionine-R-sulfoxide reductase B1 (MSRB1) of Homo sapiens (Human).